Here is a 236-residue protein sequence, read N- to C-terminus: T-cell surface glycoprotein CD8 alpha chain (236 aa).

A signal peptide spans 1–26 (MASRVICFLSLNLLLLDVITRLQVSG). The region spanning 27-130 (QLQLSPKKVD…ITSNSVMYFS (104 aa)) is the Ig-like V-type domain. Residues 27–189 (QLQLSPKKVD…MGLGFACDIY (163 aa)) are Extracellular-facing. Cysteines 47 and 119 form a disulfide. An N-linked (GlcNAc...) asparagine glycan is attached at N63. T144 is a glycosylation site (O-linked (GalNAc...) threonine; partial). Residues T148, T152, T158, and T160 are each glycosylated (O-linked (GalNAc...) threonine). The interval 150 to 170 (APTPVPPPTGTPRPLRPEACR) is disordered. Residues 190–210 (IWAPLAGICAVLLLSLVITLI) form a helical membrane-spanning segment. C211 is lipidated: S-palmitoyl cysteine. Topologically, residues 211–236 (CCHRNRRRVCKCPRPLVKPRPSEKFV) are cytoplasmic.

In terms of assembly, forms disulfide-linked heterodimers with CD8B at the cell surface. Also forms homodimers in several cell types including NK-cells or peripheral blood T-lymphocytes. Interacts with the MHC class I HLA-A/B2M dimer. Interacts with LCK in a zinc-dependent manner. Post-translationally, palmitoylated, but association with CD8B seems to be more important for the enrichment of CD8A in lipid rafts. O-glycosylated. In terms of processing, phosphorylated in cytotoxic T-lymphocytes (CTLs) following activation.

The protein resides in the cell membrane. In terms of biological role, integral membrane glycoprotein that plays an essential role in the immune response and serves multiple functions in responses against both external and internal offenses. In T-cells, functions primarily as a coreceptor for MHC class I molecule:peptide complex. The antigens presented by class I peptides are derived from cytosolic proteins while class II derived from extracellular proteins. Interacts simultaneously with the T-cell receptor (TCR) and the MHC class I proteins presented by antigen presenting cells (APCs). In turn, recruits the Src kinase LCK to the vicinity of the TCR-CD3 complex. LCK then initiates different intracellular signaling pathways by phosphorylating various substrates ultimately leading to lymphokine production, motility, adhesion and activation of cytotoxic T-lymphocytes (CTLs). This mechanism enables CTLs to recognize and eliminate infected cells and tumor cells. In NK-cells, the presence of CD8A homodimers at the cell surface provides a survival mechanism allowing conjugation and lysis of multiple target cells. CD8A homodimer molecules also promote the survival and differentiation of activated lymphocytes into memory CD8 T-cells. The protein is T-cell surface glycoprotein CD8 alpha chain (Cd8a) of Rattus norvegicus (Rat).